Reading from the N-terminus, the 889-residue chain is Translation initiation factor IF-2 (889 aa).

Disordered stretches follow at residues 47–85 (GHLK…AKSV) and 206–302 (AEAA…FTKP). 3 stretches are compositionally biased toward basic and acidic residues: residues 52 to 61 (QHGDESEAKP), 214 to 241 (AAKK…KEVV), and 252 to 263 (AEDKSDSADESG). Positions 389 to 558 (TRAPVVTIMG…LLQSEVLELT (170 aa)) constitute a tr-type G domain. The interval 398–405 (GHVDHGKT) is G1. 398 to 405 (GHVDHGKT) is a binding site for GTP. Residues 423-427 (GITQH) are G2. Positions 444 to 447 (DTPG) are G3. Residues 444–448 (DTPGH) and 498–501 (NKMD) contribute to the GTP site. The interval 498 to 501 (NKMD) is G4. A G5 region spans residues 534 to 536 (SAK).

Belongs to the TRAFAC class translation factor GTPase superfamily. Classic translation factor GTPase family. IF-2 subfamily.

The protein localises to the cytoplasm. One of the essential components for the initiation of protein synthesis. Protects formylmethionyl-tRNA from spontaneous hydrolysis and promotes its binding to the 30S ribosomal subunits. Also involved in the hydrolysis of GTP during the formation of the 70S ribosomal complex. This Colwellia psychrerythraea (strain 34H / ATCC BAA-681) (Vibrio psychroerythus) protein is Translation initiation factor IF-2.